Reading from the N-terminus, the 261-residue chain is Enolase-phosphatase E1 (261 aa).

Mg(2+) contacts are provided by Asp-16 and Glu-18. Substrate contacts are provided by residues 150–151 (SS) and Lys-184. Asp-209 is a binding site for Mg(2+).

The protein belongs to the HAD-like hydrolase superfamily. MasA/MtnC family. Monomer. Requires Mg(2+) as cofactor.

Its subcellular location is the cytoplasm. The protein localises to the nucleus. It catalyses the reaction 5-methylsulfanyl-2,3-dioxopentyl phosphate + H2O = 1,2-dihydroxy-5-(methylsulfanyl)pent-1-en-3-one + phosphate. The protein operates within amino-acid biosynthesis; L-methionine biosynthesis via salvage pathway; L-methionine from S-methyl-5-thio-alpha-D-ribose 1-phosphate: step 3/6. Its pathway is amino-acid biosynthesis; L-methionine biosynthesis via salvage pathway; L-methionine from S-methyl-5-thio-alpha-D-ribose 1-phosphate: step 4/6. Its function is as follows. Bifunctional enzyme that catalyzes the enolization of 2,3-diketo-5-methylthiopentyl-1-phosphate (DK-MTP-1-P) into the intermediate 2-hydroxy-3-keto-5-methylthiopentenyl-1-phosphate (HK-MTPenyl-1-P), which is then dephosphorylated to form the acireductone 1,2-dihydroxy-3-keto-5-methylthiopentene (DHK-MTPene). The polypeptide is Enolase-phosphatase E1 (Enoph1) (Rattus norvegicus (Rat)).